Reading from the N-terminus, the 84-residue chain is Double gene block protein 2 (84 aa).

The Lumenal portion of the chain corresponds to Met-1–Ala-4. A helical transmembrane segment spans residues Asn-5 to Cys-25. Residues Thr-26–Thr-30 are Cytoplasmic-facing. The helical transmembrane segment at Phe-31–Leu-51 threads the bilayer. At Leu-52 to Lys-84 the chain is on the lumenal side.

The protein belongs to the carmovirus double gene block protein 2 family.

The protein resides in the host endoplasmic reticulum membrane. Cell-to-cell movement function. In Carnation mottle virus (isolate China/Shanghai) (CarMV), this protein is Double gene block protein 2.